Reading from the N-terminus, the 172-residue chain is Scytalone dehydratase (172 aa).

Substrate contacts are provided by Tyr30, Tyr50, and Phe53. Residues His85 and His110 contribute to the active site. Substrate is bound at residue Asn131.

Belongs to the scytalone dehydratase family. In terms of assembly, homotrimer. Each subunit contains an active site, located in the central part of the hydrophobic core of the monomer, which functions independently.

It is found in the endosome. The enzyme catalyses scytalone = 1,3,8-trihydroxynaphthalene + H2O. Its pathway is pigment biosynthesis; melanin biosynthesis. (N-phenoxypropyl)-carboxamides such as carpropamid and derivatives of norephedrine act as inhibitors of scytalone dehydratase activity. Scytalone dehydratase; part of the gene cluster that mediates the biosynthesis of dihydroxynaphthalene melanin, a bluish-green pigment and a structural component of the conidial wall. Within the pathway, catalyzes the dehydration of scytalone as well as of vermelone. Is also able to dehydrate the alternate substrate 2,3-dihydro-2,5-dihydroxy-4H-benzopyran-4-one (DDBO) to 5-hydroxy-4H-1-benzopyran-4-one (HBO). The sequence is that of Scytalone dehydratase (SDH1) from Pyricularia oryzae (strain 70-15 / ATCC MYA-4617 / FGSC 8958) (Rice blast fungus).